A 674-amino-acid polypeptide reads, in one-letter code: Sodium/myo-inositol cotransporter 2 (674 aa).

At 1–27 (MESSPSSPQPTQSDPLAVFPQRTLEPA) the chain is on the extracellular side. Residues 28-48 (DIAVLVLYFLFVLAVGLWSTV) traverse the membrane as a helical segment. Residues 49-56 (KTRRDTVK) are Cytoplasmic-facing. Residues 57–77 (GYFLAGGDMVWWPVGASLFAS) traverse the membrane as a helical segment. The Extracellular segment spans residues 78 to 102 (NVGSGHFVGLAGSGAAAGLSVTAYE). The chain crosses the membrane as a helical span at residues 103 to 123 (FNGIFSVLMLAWIFLPIYIAG). Over 124-140 (QVTTMPEYLRKRFGGSR) the chain is Cytoplasmic. A helical transmembrane segment spans residues 141-161 (IPITLAVLYLFIYIFTKISVD). Topologically, residues 162–180 (MYAGAIFIQQSLHLNLYLA) are extracellular. A helical membrane pass occupies residues 181-201 (IVGLLAITALYTIAGGLAAVI). Residues 202–208 (YTDALQT) are Cytoplasmic-facing. The chain crosses the membrane as a helical span at residues 209-229 (LIMLIGALTLMGYSFAAVGGM). Residues 230–272 (EGLKEKYFLALASNRSGNSSCGLPREDAFHIFRDPLTSDLPWP) are Extracellular-facing. The helical transmembrane segment at 273–293 (GILFGMSIPSLWYWCTDQVIV) threads the bilayer. The Cytoplasmic portion of the chain corresponds to 294–308 (QRTLAAKNLSHAKGG). A helical membrane pass occupies residues 309-329 (SLMAAYLKVLPLFIMVFPGMV). Topologically, residues 330–374 (SRVLFPDQVACADPEICQKVCSNPAGCSDIAYPKLVLELLPMGLR) are extracellular. A helical membrane pass occupies residues 375-397 (GLMMAVMVAALMSSLTSIFNSAS). Residues 398–418 (TIFTMDLWNHLRPRASERELM) lie on the Cytoplasmic side of the membrane. A helical transmembrane segment spans residues 419–439 (IVGRVFVLLLVLVSILWIPVV). At 440 to 446 (QASQGGQ) the chain is on the extracellular side. The helical transmembrane segment at 447 to 467 (LFIYIQSISSYLQPPVAVVFI) threads the bilayer. Residues 468-479 (MGCFWKRTNEKG) are Cytoplasmic-facing. Residues 480-500 (AFSGLILGLLLGLVRLVLDFI) traverse the membrane as a helical segment. The Extracellular portion of the chain corresponds to 501–518 (YPQPRCDQPDERPAVVRD). A helical membrane pass occupies residues 519–539 (VHYLYFSMILSSVTLVTVSTV). Over 540–653 (SWCTAPPTQE…SLEEIPLVKT (114 aa)) the chain is Cytoplasmic. The helical transmembrane segment at 654–674 (LLDINLIVCISCAIFLWGYFA) threads the bilayer.

Belongs to the sodium:solute symporter (SSF) (TC 2.A.21) family.

It is found in the membrane. The protein localises to the apical cell membrane. It catalyses the reaction myo-inositol(out) + 2 Na(+)(out) = myo-inositol(in) + 2 Na(+)(in). It carries out the reaction 1D-chiro-inositol(out) + 2 Na(+)(out) = 1D-chiro-inositol(in) + 2 Na(+)(in). The enzyme catalyses D-glucose(out) + 2 Na(+)(out) = D-glucose(in) + 2 Na(+)(in). The catalysed reaction is D-xylose(out) + 2 Na(+)(out) = D-xylose(in) + 2 Na(+)(in). Its activity is regulated as follows. MI transport activity inhibited by D-chiro-inositol (DCI), phlorizin (Pz) and sodium (Na(+)). Insulin increases D-chiro-inositol uptake. Its function is as follows. Involved in the sodium-dependent cotransport of myo-inositol (MI) with a Na(+):MI stoichiometry of 2:1. Exclusively responsible for apical MI transport and absorption in intestine. Can also transport D-chiro-inositol (DCI) but not L-fucose. Exhibits stereospecific cotransport of both D-glucose and D-xylose. May induce apoptosis through the TNF-alpha, PDCD1 pathway. May play a role in the regulation of MI concentration in serum, involving reabsorption in at least the proximal tubule of the kidney. The polypeptide is Sodium/myo-inositol cotransporter 2 (Sus scrofa (Pig)).